A 300-amino-acid chain; its full sequence is Recombination-associated protein RdgC (300 aa).

It belongs to the RdgC family.

It is found in the cytoplasm. The protein resides in the nucleoid. In terms of biological role, may be involved in recombination. The sequence is that of Recombination-associated protein RdgC from Janthinobacterium sp. (strain Marseille) (Minibacterium massiliensis).